The chain runs to 88 residues: Long neurotoxin 20 (88 aa).

The signal sequence occupies residues 1–21 (MKTLLLTLVVVTIVCLDLGNS). 5 cysteine pairs are disulfide-bonded: C24–C42, C35–C63, C48–C52, C67–C78, and C79–C84.

This sequence belongs to the three-finger toxin family. Long-chain subfamily. Type II alpha-neurotoxin sub-subfamily. In terms of tissue distribution, expressed by the venom gland.

The protein localises to the secreted. In terms of biological role, binds with high affinity to muscular (alpha-1/CHRNA1) and neuronal (alpha-7/CHRNA7) nicotinic acetylcholine receptor (nAChR) and inhibits acetylcholine from binding to the receptor, thereby impairing neuromuscular and neuronal transmission. This chain is Long neurotoxin 20, found in Drysdalia coronoides (White-lipped snake).